Consider the following 339-residue polypeptide: Glycerol-3-phosphate dehydrogenase [NAD(P)+] (339 aa).

Residues Ser13, Trp14, and Lys108 each coordinate NADPH. The sn-glycerol 3-phosphate site is built by Lys108, Gly139, and Ser141. Ala143 contributes to the NADPH binding site. 5 residues coordinate sn-glycerol 3-phosphate: Lys194, Asp247, Ser257, Arg258, and Asn259. The Proton acceptor role is filled by Lys194. Residue Arg258 coordinates NADPH. Residues Val282 and Glu284 each coordinate NADPH.

It belongs to the NAD-dependent glycerol-3-phosphate dehydrogenase family.

It localises to the cytoplasm. It carries out the reaction sn-glycerol 3-phosphate + NAD(+) = dihydroxyacetone phosphate + NADH + H(+). The enzyme catalyses sn-glycerol 3-phosphate + NADP(+) = dihydroxyacetone phosphate + NADPH + H(+). Its pathway is membrane lipid metabolism; glycerophospholipid metabolism. In terms of biological role, catalyzes the reduction of the glycolytic intermediate dihydroxyacetone phosphate (DHAP) to sn-glycerol 3-phosphate (G3P), the key precursor for phospholipid synthesis. The chain is Glycerol-3-phosphate dehydrogenase [NAD(P)+] from Streptococcus mutans serotype c (strain ATCC 700610 / UA159).